The following is a 310-amino-acid chain: Beta-ketoacyl-[acyl-carrier-protein] synthase III 1 (310 aa).

Active-site residues include C112 and H235. The segment at 236–240 (QANIR) is ACP-binding. Residue N265 is part of the active site.

This sequence belongs to the thiolase-like superfamily. FabH family. In terms of assembly, homodimer.

The protein resides in the cytoplasm. The enzyme catalyses malonyl-[ACP] + acetyl-CoA + H(+) = 3-oxobutanoyl-[ACP] + CO2 + CoA. It participates in lipid metabolism; fatty acid biosynthesis. Its function is as follows. Catalyzes the condensation reaction of fatty acid synthesis by the addition to an acyl acceptor of two carbons from malonyl-ACP. Catalyzes the first condensation reaction which initiates fatty acid synthesis and may therefore play a role in governing the total rate of fatty acid production. Possesses both acetoacetyl-ACP synthase and acetyl transacylase activities. Its substrate specificity determines the biosynthesis of branched-chain and/or straight-chain of fatty acids. This Bacillus cereus (strain ATCC 14579 / DSM 31 / CCUG 7414 / JCM 2152 / NBRC 15305 / NCIMB 9373 / NCTC 2599 / NRRL B-3711) protein is Beta-ketoacyl-[acyl-carrier-protein] synthase III 1.